Reading from the N-terminus, the 494-residue chain is Lysine--tRNA ligase (494 aa).

Mg(2+) is bound by residues Glu405 and Glu412.

Belongs to the class-II aminoacyl-tRNA synthetase family. Homodimer. The cofactor is Mg(2+).

The protein localises to the cytoplasm. The enzyme catalyses tRNA(Lys) + L-lysine + ATP = L-lysyl-tRNA(Lys) + AMP + diphosphate. This Geobacillus stearothermophilus (Bacillus stearothermophilus) protein is Lysine--tRNA ligase (lysS).